Consider the following 358-residue polypeptide: Uroporphyrinogen decarboxylase (358 aa).

Residues 36-40 (RQAGR), D85, Y160, S215, and H338 each bind substrate.

This sequence belongs to the uroporphyrinogen decarboxylase family. As to quaternary structure, homodimer.

It localises to the cytoplasm. It carries out the reaction uroporphyrinogen III + 4 H(+) = coproporphyrinogen III + 4 CO2. The protein operates within porphyrin-containing compound metabolism; protoporphyrin-IX biosynthesis; coproporphyrinogen-III from 5-aminolevulinate: step 4/4. Its function is as follows. Catalyzes the decarboxylation of four acetate groups of uroporphyrinogen-III to yield coproporphyrinogen-III. This is Uroporphyrinogen decarboxylase from Corynebacterium glutamicum (strain ATCC 13032 / DSM 20300 / JCM 1318 / BCRC 11384 / CCUG 27702 / LMG 3730 / NBRC 12168 / NCIMB 10025 / NRRL B-2784 / 534).